Reading from the N-terminus, the 293-residue chain is 4-hydroxy-tetrahydrodipicolinate synthase (293 aa).

Pyruvate is bound at residue T47. Y136 acts as the Proton donor/acceptor in catalysis. K164 functions as the Schiff-base intermediate with substrate in the catalytic mechanism. Position 206 (I206) interacts with pyruvate.

Belongs to the DapA family. Homotetramer; dimer of dimers.

The protein localises to the cytoplasm. The enzyme catalyses L-aspartate 4-semialdehyde + pyruvate = (2S,4S)-4-hydroxy-2,3,4,5-tetrahydrodipicolinate + H2O + H(+). The protein operates within amino-acid biosynthesis; L-lysine biosynthesis via DAP pathway; (S)-tetrahydrodipicolinate from L-aspartate: step 3/4. Its function is as follows. Catalyzes the condensation of (S)-aspartate-beta-semialdehyde [(S)-ASA] and pyruvate to 4-hydroxy-tetrahydrodipicolinate (HTPA). The polypeptide is 4-hydroxy-tetrahydrodipicolinate synthase (Listeria monocytogenes serotype 4a (strain HCC23)).